A 379-amino-acid chain; its full sequence is LIM/homeobox protein Lhx9 (379 aa).

LIM zinc-binding domains lie at 51-112 and 113-175; these read TLCA…RFSV and QRCA…LVQG. Disordered stretches follow at residues 232-257 and 310-379; these read ENDT…TSFK and RQEN…TNLF. Residues 248 to 257 show a composition bias toward basic residues; it reads KTKRMRTSFK. A DNA-binding region (homeobox) is located at residues 249 to 308; the sequence is TKRMRTSFKHHQLRTTKSYFAINHNPDAKDLKQLAQKTGLTKRVLQVWFQNARAKFRRNL. The segment covering 326 to 379 has biased composition (polar residues); the sequence is APASTDSAALTPTGAASTLSDLTSPSLNVGASVTPNMDSHESGSPSQTTLTNLF.

In terms of tissue distribution, isoform 1 and isoform 3 are expressed in ovary, testis, brain and heart. Isoform 4 and isoform 5 are expressed in brain.

It is found in the nucleus. Its function is as follows. May be involved in gonadal development. This chain is LIM/homeobox protein Lhx9 (lhx9), found in Glandirana rugosa (Japanese wrinkled frog).